Here is a 63-residue protein sequence, read N- to C-terminus: Beta-defensin 38 (63 aa).

Positions 1–21 (MKISCFLLLVLSLYLFQVNQA) are cleaved as a signal peptide. Disulfide bonds link C29-C58, C36-C51, and C41-C59.

It belongs to the beta-defensin family.

It is found in the secreted. Its function is as follows. Has antibacterial activity. The polypeptide is Beta-defensin 38 (Defb38) (Rattus norvegicus (Rat)).